A 197-amino-acid chain; its full sequence is MNLVPTVIEQSSRGERAYDIYSRLLKDRIIMLSGPIEDEMANSIVAQLLFLDAQDSTKDIYLYINSPGGVVTSGMAIYDTMNFIKADVQTIVIGMAASMASVLVSSGAKGKRFGLPHSQVLIHQPSGGAQGQQTEIEIAATEILKTRKMLNGILAKNSGQPIEKIQADTERDHYLTAQEAVDYGLLDGVMENNSKLK.

Catalysis depends on Ser-98, which acts as the Nucleophile. The active site involves His-123.

Belongs to the peptidase S14 family. As to quaternary structure, fourteen ClpP subunits assemble into 2 heptameric rings which stack back to back to give a disk-like structure with a central cavity, resembling the structure of eukaryotic proteasomes.

The protein localises to the cytoplasm. The catalysed reaction is Hydrolysis of proteins to small peptides in the presence of ATP and magnesium. alpha-casein is the usual test substrate. In the absence of ATP, only oligopeptides shorter than five residues are hydrolyzed (such as succinyl-Leu-Tyr-|-NHMec, and Leu-Tyr-Leu-|-Tyr-Trp, in which cleavage of the -Tyr-|-Leu- and -Tyr-|-Trp bonds also occurs).. Its function is as follows. Cleaves peptides in various proteins in a process that requires ATP hydrolysis. Has a chymotrypsin-like activity. Plays a major role in the degradation of misfolded proteins. The chain is ATP-dependent Clp protease proteolytic subunit from Limosilactobacillus reuteri (strain DSM 20016) (Lactobacillus reuteri).